The chain runs to 906 residues: Eukaryotic translation initiation factor 4 gamma 2 (906 aa).

Met1 bears the N-acetylmethionine mark. The disordered stretch occupies residues 1–71; the sequence is MESAIAEGGA…SAANNSANEK (71 aa). Ser11 carries the phosphoserine modification. Positions 78-308 constitute an MIF4G domain; sequence FRKVRGILNK…QDTVELREHH (231 aa). Thr89 carries the post-translational modification Phosphothreonine. Position 359 is an omega-N-methylarginine (Arg359). Residue Ser394 is modified to Phosphoserine. Lys430 carries the post-translational modification N6-methyllysine. Residue Ser442 is modified to Phosphoserine. The tract at residues 497 to 540 is disordered; the sequence is PPSAQPPRTQTPPLGQTPQLGLKTNPPLIQEKPAKTSKKPPPSK. The segment covering 502 to 515 has biased composition (polar residues); the sequence is PPRTQTPPLGQTPQ. An Omega-N-methylarginine modification is found at Arg504. Residues Thr507 and Thr513 each carry the phosphothreonine modification. The MI domain occupies 542-665; the sequence is ELLKLTEAVV…SISELAQPLE (124 aa). A Glycyl lysine isopeptide (Lys-Gly) (interchain with G-Cter in SUMO2) cross-link involves residue Lys574. In terms of domain architecture, W2 spans 719–903; that stretch reads EGKGLSFLFP…ETAEEEESEE (185 aa). A Phosphoserine modification is found at Ser901.

This sequence belongs to the eukaryotic initiation factor 4G family. In terms of assembly, interacts with the serine/threonine protein kinases MKNK1 and MKNK2. Binds EIF4A and EIF3. Interacts with MIF4GD. Interacts with DAZAP2. Phosphorylation; hyperphosphorylated during mitosis. Ubiquitously expressed in all tissues examined.

In terms of biological role, appears to play a role in the switch from cap-dependent to IRES-mediated translation during mitosis, apoptosis and viral infection. Cleaved by some caspases and viral proteases. The protein is Eukaryotic translation initiation factor 4 gamma 2 of Mus musculus (Mouse).